The chain runs to 235 residues: MRSRKSLPPLPPEQACLPWHPPGLVAGVDEAGRGPLAGPVVAAAVILDDLNPIEGLNDSKKLTAARREALYDEIRAKALCCSIAEASVEEIDRLNILQATLLAMRRAVLGLRLKPVLVLVDGNQLPVLDVQAEAIVKGDSLVQAISAASILAKVTRDRWCERLHEQYPEYGFDGHKGYGTAAHLAALRLHGACEEHRRTFAPVAHVVSIARMAEPLAAARVAAAAQGAQALLLSA.

The RNase H type-2 domain occupies 23–212; that stretch reads GLVAGVDEAG…VAHVVSIARM (190 aa). The a divalent metal cation site is built by aspartate 29, glutamate 30, and aspartate 121.

Belongs to the RNase HII family. Mn(2+) is required as a cofactor. The cofactor is Mg(2+).

Its subcellular location is the cytoplasm. The enzyme catalyses Endonucleolytic cleavage to 5'-phosphomonoester.. Endonuclease that specifically degrades the RNA of RNA-DNA hybrids. This Delftia acidovorans (strain DSM 14801 / SPH-1) protein is Ribonuclease HII.